The primary structure comprises 449 residues: Phosphoribosylamine--glycine ligase (449 aa).

Residues 112–325 form the ATP-grasp domain; that stretch reads RELMEKYDIP…IVTLHASIAE (214 aa). 139–202 lines the ATP pocket; the sequence is IDELGKPVAV…EEKCVGEEYT (64 aa). Mg(2+) is bound by residues Gln-283, Glu-295, and Asn-297. Residues Gln-283, Glu-295, and Asn-297 each contribute to the Mn(2+) site.

The protein belongs to the GARS family. Mg(2+) is required as a cofactor. The cofactor is Mn(2+).

The catalysed reaction is 5-phospho-beta-D-ribosylamine + glycine + ATP = N(1)-(5-phospho-beta-D-ribosyl)glycinamide + ADP + phosphate + H(+). Its pathway is purine metabolism; IMP biosynthesis via de novo pathway; N(1)-(5-phospho-D-ribosyl)glycinamide from 5-phospho-alpha-D-ribose 1-diphosphate: step 2/2. The sequence is that of Phosphoribosylamine--glycine ligase from Methanopyrus kandleri (strain AV19 / DSM 6324 / JCM 9639 / NBRC 100938).